Consider the following 427-residue polypeptide: GTPase Obg (427 aa).

The region spanning 1-158 is the Obg domain; that stretch reads MFIDKAKIHL…LTVTLELKLI (158 aa). An OBG-type G domain is found at 159–330; that stretch reads ADVGLVGFPN…LLDYVSIKLK (172 aa). Residues 165-172, 190-194, 212-215, 282-285, and 311-313 contribute to the GTP site; these read GFPNVGKS, FTTLT, DIPG, NKTD, and SAA. Mg(2+) is bound by residues S172 and T192. In terms of domain architecture, OCT spans 347 to 427; it reads LYELKEKDTN…IYDVEFEYFH (81 aa).

Belongs to the TRAFAC class OBG-HflX-like GTPase superfamily. OBG GTPase family. As to quaternary structure, monomer. The cofactor is Mg(2+).

It localises to the cytoplasm. In terms of biological role, an essential GTPase which binds GTP, GDP and possibly (p)ppGpp with moderate affinity, with high nucleotide exchange rates and a fairly low GTP hydrolysis rate. Plays a role in control of the cell cycle, stress response, ribosome biogenesis and in those bacteria that undergo differentiation, in morphogenesis control. This Alkaliphilus metalliredigens (strain QYMF) protein is GTPase Obg.